A 199-amino-acid chain; its full sequence is Nucleoside triphosphate pyrophosphatase (199 aa).

Residue D72 is the Proton acceptor of the active site.

The protein belongs to the Maf family. It depends on a divalent metal cation as a cofactor.

It localises to the cytoplasm. It carries out the reaction a ribonucleoside 5'-triphosphate + H2O = a ribonucleoside 5'-phosphate + diphosphate + H(+). It catalyses the reaction a 2'-deoxyribonucleoside 5'-triphosphate + H2O = a 2'-deoxyribonucleoside 5'-phosphate + diphosphate + H(+). In terms of biological role, nucleoside triphosphate pyrophosphatase. May have a dual role in cell division arrest and in preventing the incorporation of modified nucleotides into cellular nucleic acids. The protein is Nucleoside triphosphate pyrophosphatase of Synechococcus elongatus (strain ATCC 33912 / PCC 7942 / FACHB-805) (Anacystis nidulans R2).